Reading from the N-terminus, the 535-residue chain is MNGKSFLDSSSTKILQDLAVAPIDLTSPGIISKERIERFSLFVEGFTFSYAMERVDDGILSALTGLASERGLLASMKAMQNGEVVNYIDNFPSESRPALHTATRAWVRGISLTGNAEDISLRSKIEVQRLRDFLNKYRDAFTTIVQIGIGGSELGPKALHCALKGCCPSDKKVYFVSNVDPDNAAEVLQEIDCSKTLVVTVSKSGTTLETAVNEELFADHFLKQGLSFRDHFIAVTCEGSPMDDTTRYLEVFHIWDSIGGRFSSTSMVGGVVLGFAYGFDAFIQLLEGAAAMDLVALEPHMSENLPMLSAMLGIWNRNFLRYPTTAVIPYSMGLEYFPAHLQQCGMESNGKSVAQTGELIGFSTSPILWGELGTNSQHSFFQALHQGSDIVPVEFIGFLRNQRGRDIEISGSSSSQKLFANMIAQSIALAKGRENVNPNKNFKGNRPSSLLVSERLTPYTMGALLAFYEHKIVFQGFCWGINSFDQEGVTLGKDLANQVLRIMQGQQGGDNVVIEAEALLGLFDKNKKLKEFGEA.

Catalysis depends on Glu347, which acts as the Proton donor. Active-site residues include His378 and Lys493.

It belongs to the GPI family.

Its subcellular location is the cytoplasm. The enzyme catalyses alpha-D-glucose 6-phosphate = beta-D-fructose 6-phosphate. It functions in the pathway carbohydrate biosynthesis; gluconeogenesis. It participates in carbohydrate degradation; glycolysis; D-glyceraldehyde 3-phosphate and glycerone phosphate from D-glucose: step 2/4. Catalyzes the reversible isomerization of glucose-6-phosphate to fructose-6-phosphate. The sequence is that of Glucose-6-phosphate isomerase from Chlamydia felis (strain Fe/C-56) (Chlamydophila felis).